A 426-amino-acid polypeptide reads, in one-letter code: Histidine--tRNA ligase (426 aa).

It belongs to the class-II aminoacyl-tRNA synthetase family. In terms of assembly, homodimer.

The protein localises to the cytoplasm. The catalysed reaction is tRNA(His) + L-histidine + ATP = L-histidyl-tRNA(His) + AMP + diphosphate + H(+). The chain is Histidine--tRNA ligase from Streptococcus pyogenes serotype M28 (strain MGAS6180).